The following is a 606-amino-acid chain: Putative helicase 172L (606 aa).

One can recognise a Helicase ATP-binding domain in the interval 59–264 (GEKTWGVRGG…WAQLRFCGYK (206 aa)). Residue 72-79 (LCMGLGKT) coordinates ATP. Residues 437–586 (YIKSSNFEIS…ASYLEGKERI (150 aa)) form the Helicase C-terminal domain.

The protein belongs to the SNF2/RAD54 helicase family.

The sequence is that of Putative helicase 172L from Invertebrate iridescent virus 6 (IIV-6).